The chain runs to 239 residues: Fatty acid metabolism regulator protein (239 aa).

In terms of domain architecture, HTH gntR-type spans 6–74 (KGPASFAEKY…HGKPTQVNNF (69 aa)). Residues 34 to 53 (ERELSELIGVTRTTLREVLQ) constitute a DNA-binding region (H-T-H motif).

Homodimer.

It is found in the cytoplasm. In terms of biological role, multifunctional regulator of fatty acid metabolism. The chain is Fatty acid metabolism regulator protein from Shewanella denitrificans (strain OS217 / ATCC BAA-1090 / DSM 15013).